A 365-amino-acid chain; its full sequence is Tetraacyldisaccharide 4'-kinase (365 aa).

Residue 68–75 (VVGGAGKT) participates in ATP binding.

Belongs to the LpxK family.

The enzyme catalyses a lipid A disaccharide + ATP = a lipid IVA + ADP + H(+). The protein operates within glycolipid biosynthesis; lipid IV(A) biosynthesis; lipid IV(A) from (3R)-3-hydroxytetradecanoyl-[acyl-carrier-protein] and UDP-N-acetyl-alpha-D-glucosamine: step 6/6. Functionally, transfers the gamma-phosphate of ATP to the 4'-position of a tetraacyldisaccharide 1-phosphate intermediate (termed DS-1-P) to form tetraacyldisaccharide 1,4'-bis-phosphate (lipid IVA). The polypeptide is Tetraacyldisaccharide 4'-kinase (Chlamydia pneumoniae (Chlamydophila pneumoniae)).